A 243-amino-acid polypeptide reads, in one-letter code: Vesicle-associated membrane protein-associated protein B (243 aa).

Position 2 is an N-acetylalanine (Ala-2). At 2–218 the chain is on the cytoplasmic side; sequence AKVEQVLSLE…PASAMAGKEE (217 aa). Positions 7–124 constitute an MSP domain; it reads VLSLEPQHEL…MDSKLRCVFE (118 aa). The residue at position 146 (Ser-146) is a Phosphoserine. Lys-147 is covalently cross-linked (Glycyl lysine isopeptide (Lys-Gly) (interchain with G-Cter in SUMO1)). At Thr-150 the chain carries Phosphothreonine. A phosphoserine mark is found at Ser-158, Ser-159, and Ser-160. A coiled-coil region spans residues 161 to 196; it reads LDDTEVKKVMEECKRLQSEVQRLREENKQFKEEDGL. Basic and acidic residues predominate over residues 186–197; sequence ENKQFKEEDGLR. A disordered region spans residues 186–214; it reads ENKQFKEEDGLRMRKTAQSNSPAPASAMA. Position 206 is a phosphoserine (Ser-206). Residues 219-239 form a helical; Anchor for type IV membrane protein membrane-spanning segment; that stretch reads GLSTRLLALVVLFFIVGVIIG.

Belongs to the VAMP-associated protein (VAP) (TC 9.B.17) family. As to quaternary structure, homodimer, and heterodimer with VAPA. Interacts with VAMP1 and VAMP2. Interacts (via MSP domain) with ZFYVE27. Interacts with RMDN3. Interacts with KIF5A in a ZFYVE27-dependent manner. Interacts (via MSP domain) with STARD3 (via phospho-FFAT motif). Interacts with STARD3NL (via FFAT motif). Interacts with CERT1. Interacts with PLEKHA3 and SACM1L to form a ternary complex. Interacts with VPS13A (via FFAT motif). Interacts with RB1CC1 (via phosphorylated FFAT motif), MIGA2 (via phosphorylated FFAT motif), RMDN3 (via phosphorylated FFAT motif), OSBPL1A (via FFAT motif), KCNB1 (via phosphorylated FFAT motif) and KCNB2 (via phosphorylated FFAT motif). Interacts (via MSP domain) with WDR44 (via FFAT motif); the interactions connect the endoplasmic reticulum (ER) with the endosomal tubule.

It localises to the endoplasmic reticulum membrane. In terms of biological role, endoplasmic reticulum (ER)-anchored protein that mediates the formation of contact sites between the ER and endosomes via interaction with FFAT motif-containing proteins such as STARD3 or WDR44. Interacts with STARD3 in a FFAT motif phosphorylation dependent manner. Via interaction with WDR44 participates in neosynthesized protein export. Participates in the endoplasmic reticulum unfolded protein response (UPR) by inducing ERN1/IRE1 activity. Involved in cellular calcium homeostasis regulation. The chain is Vesicle-associated membrane protein-associated protein B from Bos taurus (Bovine).